The sequence spans 441 residues: Putative F-box protein At1g33530 (441 aa).

One can recognise an F-box domain in the interval 91–137 (TTLAVELPDVLVEEILQRLPVKYLVRLKSISKGWKSLIESDHLAEKH).

This is Putative F-box protein At1g33530 from Arabidopsis thaliana (Mouse-ear cress).